The following is a 129-amino-acid chain: Large ribosomal subunit protein bL17 (129 aa).

It belongs to the bacterial ribosomal protein bL17 family. As to quaternary structure, part of the 50S ribosomal subunit. Contacts protein L32.

This Buchnera aphidicola subsp. Baizongia pistaciae (strain Bp) protein is Large ribosomal subunit protein bL17.